The following is a 180-amino-acid chain: Large ribosomal subunit protein uL5 (180 aa).

The protein belongs to the universal ribosomal protein uL5 family. As to quaternary structure, part of the 50S ribosomal subunit; part of the 5S rRNA/L5/L18/L25 subcomplex. Contacts the 5S rRNA and the P site tRNA. Forms a bridge to the 30S subunit in the 70S ribosome.

Its function is as follows. This is one of the proteins that bind and probably mediate the attachment of the 5S RNA into the large ribosomal subunit, where it forms part of the central protuberance. In the 70S ribosome it contacts protein S13 of the 30S subunit (bridge B1b), connecting the 2 subunits; this bridge is implicated in subunit movement. Contacts the P site tRNA; the 5S rRNA and some of its associated proteins might help stabilize positioning of ribosome-bound tRNAs. This Roseiflexus sp. (strain RS-1) protein is Large ribosomal subunit protein uL5.